A 245-amino-acid polypeptide reads, in one-letter code: Platelet-derived growth factor subunit B (245 aa).

An N-terminal signal peptide occupies residues Met1 to Ala20. A propeptide spans Glu21–Arg81 (removed in mature form). The N-linked (GlcNAc...) asparagine glycan is linked to Asn63. 3 cysteine pairs are disulfide-bonded: Cys101–Cys145, Cys134–Cys182, and Cys138–Cys184. Residues Arg195–Ala245 constitute a propeptide, removed in mature form. A compositionally biased stretch (basic residues) spans Arg220 to Asp235. The disordered stretch occupies residues Arg220 to Ala245. Over residues Lys236–Ala245 the composition is skewed to basic and acidic residues.

This sequence belongs to the PDGF/VEGF growth factor family. Antiparallel homodimer; disulfide-linked. Antiparallel heterodimer with PDGFA; disulfide-linked. The PDGFB homodimer interacts with PDGFRA and PDGFRB homodimers, and with heterodimers formed by PDGFRA and PDGFRB. The heterodimer composed of PDGFA and PDGFB interacts with PDGFRB homodimers, and with heterodimers formed by PDGFRA and PDGFRB. Interacts with XLKD1. Interacts with LRP1. Interacts with SORL1 (via the N-terminal ectodomain). Interacts with CD82; this interaction inhibits PDGFB-mediated signaling pathway.

It localises to the secreted. Its function is as follows. Growth factor that plays an essential role in the regulation of embryonic development, cell proliferation, cell migration, survival and chemotaxis. Potent mitogen for cells of mesenchymal origin. Required for normal proliferation and recruitment of pericytes and vascular smooth muscle cells in the central nervous system, skin, lung, heart and placenta. Required for normal blood vessel development, and for normal development of kidney glomeruli. Plays an important role in wound healing. Signaling is modulated by the formation of heterodimers with PDGFA. The chain is Platelet-derived growth factor subunit B (PDGFB) from Felis catus (Cat).